A 313-amino-acid chain; its full sequence is Hydroxyacylglutathione hydrolase, mitochondrial (313 aa).

Zn(2+) is bound by residues histidine 107, histidine 109, aspartate 111, histidine 112, histidine 163, and aspartate 187. Substrate contacts are provided by residues 196–198 (KFF) and 226–228 (HEY). Histidine 226 serves as a coordination point for Zn(2+). 2 stretches are compositionally biased toward basic and acidic residues: residues 285–294 (VQEHAGERDP) and 301–313 (IRKE…VPKD). The interval 285–313 (VQEHAGERDPISTMGAIRKEKDHFKVPKD) is disordered. 302-305 (RKEK) is a substrate binding site.

This sequence belongs to the metallo-beta-lactamase superfamily. Glyoxalase II family. In terms of assembly, monomer. It depends on Zn(2+) as a cofactor.

Its subcellular location is the mitochondrion matrix. It is found in the cytoplasm. The enzyme catalyses an S-(2-hydroxyacyl)glutathione + H2O = a 2-hydroxy carboxylate + glutathione + H(+). It carries out the reaction (R)-S-lactoylglutathione + H2O = (R)-lactate + glutathione + H(+). Thiolesterase that catalyzes the hydrolysis of S-D-lactoyl-glutathione to form glutathione and D-lactic acid. The polypeptide is Hydroxyacylglutathione hydrolase, mitochondrial (hagh) (Xenopus tropicalis (Western clawed frog)).